The chain runs to 31 residues: Palustrin-2c (31 aa).

A disulfide bond links Cys-23 and Cys-29.

Expressed by the skin glands.

The protein localises to the secreted. In terms of biological role, antimicrobial activity against Gram-negative bacterium E.coli. The sequence is that of Palustrin-2c from Lithobates palustris (Pickerel frog).